A 313-amino-acid chain; its full sequence is MMENYKHTTVLLDEAVNGLNIRPDGIYIDGTFGRGGHSRLILSQLGEEGRLLAIDRDPQAIAVAKTIDDPRFSIIHGPFSALGEYVAERDLIGKIDGILLDLGVSSPQLDDAERGFSFMRDGPLDMRMDPTRGQSAAEWLQTAEEADIAWVLKTYGEEHFAKRIARAIVERNREQPMTRTKELAEVVAAATPVKDKFKHPATRTFQAVRIWVNSELEEIEQALKSSLNVLAPGGRLSIISFHSLEDRIVKRFMRENSRGPQVPAGLPMTEEQLKKLGGRQLRALGKLMPGEDEVAENPRARSSVLRIAERTNA.

Residues 35–37, aspartate 55, phenylalanine 79, aspartate 101, and glutamine 108 each bind S-adenosyl-L-methionine; that span reads GGH.

It belongs to the methyltransferase superfamily. RsmH family.

The protein resides in the cytoplasm. The enzyme catalyses cytidine(1402) in 16S rRNA + S-adenosyl-L-methionine = N(4)-methylcytidine(1402) in 16S rRNA + S-adenosyl-L-homocysteine + H(+). Functionally, specifically methylates the N4 position of cytidine in position 1402 (C1402) of 16S rRNA. This Shigella flexneri serotype 5b (strain 8401) protein is Ribosomal RNA small subunit methyltransferase H.